A 271-amino-acid polypeptide reads, in one-letter code: OX-2 membrane glycoprotein homolog (271 aa).

A signal peptide spans 1 to 24 (MSSLFISLPWVAFIWLALLGAVGG). The Extracellular segment spans residues 25–227 (ARVQGPMRGS…QGPLAHDLPA (203 aa)). Residues 26-129 (RVQGPMRGSA…SCTACLEVTS (104 aa)) form the Ig-like V-type domain. Cys-39 and Cys-109 are disulfide-bonded. Asn-83, Asn-91, Asn-138, Asn-157, Asn-166, and Asn-208 each carry an N-linked (GlcNAc...) asparagine; by host glycan. Residues 130 to 220 (PPTGHVQVNS…ISIPASIQGP (91 aa)) enclose the Ig-like C2-type domain. Cys-148 and Cys-202 are oxidised to a cystine. The chain crosses the membrane as a helical span at residues 228–248 (AQGTLAGVAITLVGLFGIFAL). Over 249 to 271 (HHCRRKQGGASPTSDDMDPLSTQ) the chain is Cytoplasmic.

Interacts with human CD200R1. In terms of processing, N-glycosylated.

The protein localises to the host cell membrane. Its function is as follows. Dramatically stimulates primary monocytes, macrophages, and dendritic cells to produce the inflammatory cytokines interleukin 1-beta, IL-6, monocyte chemoattractant protein 1, and TNF-alpha. The induction of inflammatory cytokine production potentially promotes the cytokine-mediated angiogenic proliferation of KSHV-infected cells. This is OX-2 membrane glycoprotein homolog (K14) from Human herpesvirus 8 type P (isolate GK18) (HHV-8).